The primary structure comprises 100 residues: MTKSELIEVIAGKQQHLAHKDVELAVKTLLEQMSETLASGERIEIRGFGSFSLHHRPPRIGRNPKTGEPVALPGKYVPHFKPGKELRDRVNAGRHNPIQS.

The disordered stretch occupies residues 53–100; it reads LHHRPPRIGRNPKTGEPVALPGKYVPHFKPGKELRDRVNAGRHNPIQS. The segment covering 82–91 has biased composition (basic and acidic residues); it reads PGKELRDRVN.

Belongs to the bacterial histone-like protein family. As to quaternary structure, heterodimer of an alpha and a beta chain.

This protein is one of the two subunits of integration host factor, a specific DNA-binding protein that functions in genetic recombination as well as in transcriptional and translational control. The polypeptide is Integration host factor subunit beta (Alkalilimnicola ehrlichii (strain ATCC BAA-1101 / DSM 17681 / MLHE-1)).